A 337-amino-acid polypeptide reads, in one-letter code: F420-dependent glucose-6-phosphate dehydrogenase (337 aa).

Asp-40 provides a ligand contact to coenzyme F420-(gamma-Glu)n. His-41 serves as the catalytic Proton donor. Residues Thr-77 and 108 to 109 (SG) each bind coenzyme F420-(gamma-Glu)n. Residue Glu-110 is the Proton acceptor of the active site. Residues Asn-113, 178–179 (GG), and 181–182 (VV) contribute to the coenzyme F420-(gamma-Glu)n site. Residues Thr-196, Lys-199, Lys-260, and Arg-284 each coordinate substrate.

This sequence belongs to the F420-dependent glucose-6-phosphate dehydrogenase family. Homodimer.

The catalysed reaction is oxidized coenzyme F420-(gamma-L-Glu)(n) + D-glucose 6-phosphate + H(+) = 6-phospho-D-glucono-1,5-lactone + reduced coenzyme F420-(gamma-L-Glu)(n). Catalyzes the coenzyme F420-dependent oxidation of glucose 6-phosphate (G6P) to 6-phosphogluconolactone. The polypeptide is F420-dependent glucose-6-phosphate dehydrogenase (Rhodococcus erythropolis (strain PR4 / NBRC 100887)).